We begin with the raw amino-acid sequence, 186 residues long: Interferon beta (186 aa).

An N-terminal signal peptide occupies residues 1-21 (MTGRCILQIALLVCFFTTAHS). Phosphotyrosine is present on Tyr24. Asn46, Asn101, Asn131, and Asn136 each carry an N-linked (GlcNAc...) asparagine glycan. Cys52 and Cys161 are oxidised to a cystine.

Belongs to the alpha/beta interferon family. Monomer.

The protein localises to the secreted. Functionally, type I interferon cytokine that plays a key role in the innate immune response to infection, developing tumors and other inflammatory stimuli. Signals via binding to high-affinity (IFNAR2) and low-affinity (IFNAR1) heterodimeric receptor, activating the canonical Jak-STAT signaling pathway resulting in transcriptional activation or repression of interferon-regulated genes that encode the effectors of the interferon response, such as antiviral proteins, regulators of cell proliferation and differentiation, and immunoregulatory proteins. Signals mostly via binding to a IFNAR1-IFNAR2 heterodimeric receptor, but can also function with IFNAR1 alone and independently of Jak-STAT pathways. Elicits a wide variety of responses, including antiviral and antibacterial activities, and can regulate the development of B-cells, myelopoiesis and lipopolysaccharide (LPS)-inducible production of tumor necrosis factor. Plays a role in neuronal homeostasis by regulating dopamine turnover and protecting dopaminergic neurons: acts by promoting neuronal autophagy and alpha-synuclein clearance, thereby preventing dopaminergic neuron loss. IFNB1 is more potent than interferon-alpha (IFN-alpha) in inducing the apoptotic and antiproliferative pathways required for control of tumor cell growth. This chain is Interferon beta (IFNB1), found in Felis catus (Cat).